The chain runs to 297 residues: Acetylglutamate kinase (297 aa).

Residues 70 to 71 (GG), Arg92, and Asn194 contribute to the substrate site.

The protein belongs to the acetylglutamate kinase family. ArgB subfamily.

The protein localises to the cytoplasm. The catalysed reaction is N-acetyl-L-glutamate + ATP = N-acetyl-L-glutamyl 5-phosphate + ADP. It functions in the pathway amino-acid biosynthesis; L-arginine biosynthesis; N(2)-acetyl-L-ornithine from L-glutamate: step 2/4. In terms of biological role, catalyzes the ATP-dependent phosphorylation of N-acetyl-L-glutamate. The sequence is that of Acetylglutamate kinase from Janthinobacterium sp. (strain Marseille) (Minibacterium massiliensis).